The chain runs to 152 residues: Protein Smg homolog (152 aa).

The protein belongs to the Smg family.

The protein is Protein Smg homolog of Bordetella bronchiseptica (strain ATCC BAA-588 / NCTC 13252 / RB50) (Alcaligenes bronchisepticus).